Here is a 111-residue protein sequence, read N- to C-terminus: WAP four-disulfide core domain protein 12 (111 aa).

Residues 1–23 (MGSSSFLVLMVSLTLVTLVAVEG) form the signal peptide. In terms of domain architecture, WAP spans 27 to 74 (DIEKAGVCPADNVRCFKSDPPQCHTDQDCLGERKCCYLHCGFKCVIPV). 4 cysteine pairs are disulfide-bonded: Cys-34–Cys-62, Cys-41–Cys-66, Cys-49–Cys-61, and Cys-55–Cys-70. The segment at 80–111 (GGNKDEDVSRPYPEPGWEAKCPGSSSTRCPQK) is disordered. The segment covering 102–111 (GSSSTRCPQK) has biased composition (polar residues).

The protein localises to the secreted. Antibacterial protein. Putative acid-stable proteinase inhibitor. The chain is WAP four-disulfide core domain protein 12 (WFDC12) from Pan troglodytes (Chimpanzee).